Reading from the N-terminus, the 209-residue chain is Ribosomal RNA large subunit methyltransferase E (209 aa).

Residues Gly63, Trp65, Asp83, Asp99, and Asp124 each coordinate S-adenosyl-L-methionine. Residue Lys164 is the Proton acceptor of the active site.

It belongs to the class I-like SAM-binding methyltransferase superfamily. RNA methyltransferase RlmE family.

The protein localises to the cytoplasm. The enzyme catalyses uridine(2552) in 23S rRNA + S-adenosyl-L-methionine = 2'-O-methyluridine(2552) in 23S rRNA + S-adenosyl-L-homocysteine + H(+). In terms of biological role, specifically methylates the uridine in position 2552 of 23S rRNA at the 2'-O position of the ribose in the fully assembled 50S ribosomal subunit. The polypeptide is Ribosomal RNA large subunit methyltransferase E (Klebsiella pneumoniae (strain 342)).